We begin with the raw amino-acid sequence, 281 residues long: Survival motor neuron protein 1 (281 aa).

Disordered stretches follow at residues 1-20 (MANGAEDVVFCRGTGQSDDS) and 42-77 (ALKGEDGATPQENDNPGKKRKNNKKNKSRKRCNAAP). Residue Thr14 is modified to Phosphothreonine. 2 positions are modified to phosphoserine: Ser17 and Ser20. Positions 59–73 (KKRKNNKKNKSRKRC) are enriched in basic residues. Residues 80–140 (EWQVGDSCYA…LTEPPDMDED (61 aa)) form the Tudor domain. The span at 145–159 (ANVKETESSTEESDR) shows a compositional bias: basic and acidic residues. The segment at 145–242 (ANVKETESST…PMSPDFGEDD (98 aa)) is disordered. Pro residues-rich tracts occupy residues 179–197 (MGPPSWFPSFPPGPPPPPP) and 212–235 (PSFPGWPPMIPLGPPMIPPPPPMS). Positions 225–252 (PPMIPPPPPMSPDFGEDDEALGSMLISW) are P2 (binding site for SNRPB). The interval 264-279 (GLRQGRKEAAASKKSH) is required for interaction with SYNCRIP.

It belongs to the SMN family. Homodimer. Component of an import snRNP complex composed of kpnb1, rnut1, smn1 and znf259. Part of the core SMN complex that contains smn1, gemin2/sip1, ddx20/gemin3, gemin4, gemin5, gemin6, gemin7, gemin8 and strap/unrip. Interacts with ddx20, fbl, nola1, rnut1, syncrip and with several spliceosomal snRNP core Sm proteins, including snrpb, snrpd1, snrpd2, snrpd3, snrpe and ilf3. Interacts with elavl4.

It localises to the nucleus. The protein resides in the gem. Its subcellular location is the cajal body. It is found in the cytoplasm. The protein localises to the cytoplasmic granule. It localises to the perikaryon. The protein resides in the cell projection. Its subcellular location is the neuron projection. It is found in the myofibril. The protein localises to the sarcomere. It localises to the z line. Its function is as follows. The SMN complex plays an essential role in spliceosomal snRNP assembly in the cytoplasm and is required for pre-mRNA splicing in the nucleus. It may also play a role in the metabolism of snoRNPs. Required in motor neurons and proprioceptive neurons to ensure correct U12 intron splicing and proper levels of tmem41b mRNA. Required for the maturation of motor neuron axonal branches and dendrites. The polypeptide is Survival motor neuron protein 1 (smn1) (Danio rerio (Zebrafish)).